A 413-amino-acid chain; its full sequence is 26S proteasome regulatory subunit 6B homolog (413 aa).

The tract at residues 1–30 is disordered; the sequence is MATAMVLDPKPAEKLPATRPETSITDVPSD. Residues 32–80 adopt a coiled-coil conformation; that stretch reads EDDLYARLKSLQRQLEFIEIQEEYVKDELKNLRREHLRAQEEVKRIQSV. ATP is bound at residue 201 to 208; sequence GPPGTGKT.

Belongs to the AAA ATPase family.

It localises to the cytoplasm. The protein localises to the nucleus. Its function is as follows. The 26S proteasome is involved in the ATP-dependent degradation of ubiquitinated proteins. The regulatory (or ATPase) complex confers ATP dependency and substrate specificity to the 26S complex. This chain is 26S proteasome regulatory subunit 6B homolog, found in Solanum tuberosum (Potato).